The sequence spans 394 residues: 8-amino-7-oxononanoate synthase (394 aa).

Arg-21 serves as a coordination point for substrate. 112–113 (GY) is a binding site for pyridoxal 5'-phosphate. His-137 contributes to the substrate binding site. Pyridoxal 5'-phosphate is bound by residues Ser-183, His-211, and Thr-239. At Lys-242 the chain carries N6-(pyridoxal phosphate)lysine. Thr-358 is a substrate binding site.

This sequence belongs to the class-II pyridoxal-phosphate-dependent aminotransferase family. BioF subfamily. Homodimer. The cofactor is pyridoxal 5'-phosphate.

The catalysed reaction is 6-carboxyhexanoyl-[ACP] + L-alanine + H(+) = (8S)-8-amino-7-oxononanoate + holo-[ACP] + CO2. It participates in cofactor biosynthesis; biotin biosynthesis. Catalyzes the decarboxylative condensation of pimeloyl-[acyl-carrier protein] and L-alanine to produce 8-amino-7-oxononanoate (AON), [acyl-carrier protein], and carbon dioxide. The protein is 8-amino-7-oxononanoate synthase of Paraburkholderia phymatum (strain DSM 17167 / CIP 108236 / LMG 21445 / STM815) (Burkholderia phymatum).